The chain runs to 371 residues: Histidinol-phosphate aminotransferase (371 aa).

Residue Lys228 is modified to N6-(pyridoxal phosphate)lysine.

The protein belongs to the class-II pyridoxal-phosphate-dependent aminotransferase family. Histidinol-phosphate aminotransferase subfamily. Pyridoxal 5'-phosphate serves as cofactor.

It carries out the reaction L-histidinol phosphate + 2-oxoglutarate = 3-(imidazol-4-yl)-2-oxopropyl phosphate + L-glutamate. It functions in the pathway amino-acid biosynthesis; L-histidine biosynthesis; L-histidine from 5-phospho-alpha-D-ribose 1-diphosphate: step 7/9. This Methanococcus aeolicus (strain ATCC BAA-1280 / DSM 17508 / OCM 812 / Nankai-3) protein is Histidinol-phosphate aminotransferase.